Here is a 686-residue protein sequence, read N- to C-terminus: Disintegrin and metalloproteinase domain-containing protein 17 homolog (686 aa).

Positions 1-21 (MKIQDRSLLIFLVLGILKSDA) are cleaved as a signal peptide. Positions 22–177 (FNTRVKRHAP…RRAIAIPSDR (156 aa)) are excised as a propeptide. Residues N59, N206, and N262 are each glycosylated (N-linked (GlcNAc...) asparagine). Over 178 to 637 (RKDVLNVKRN…TGGVLEFIKT (460 aa)) the chain is Extracellular. Residues 187-445 (NRCTLKLVAD…KWESCFQEEM (259 aa)) enclose the Peptidase M12B domain. 2 disulfide bridges follow: C328–C440 and C394–C424. H370 provides a ligand contact to Zn(2+). E371 is a catalytic residue. Residues H374 and H380 each coordinate Zn(2+). The region spanning 446–535 (TSFCGNGIVE…ECPSAPPVRD (90 aa)) is the Disintegrin domain. Residue N501 is glycosylated (N-linked (GlcNAc...) asparagine). A disulfide bridge connects residues C506 and C527. N-linked (GlcNAc...) asparagine glycosylation occurs at N581. Residues 638–658 (HIVVIAIIFFTLIFVGIYKIV) form a helical membrane-spanning segment. Over 659 to 686 (KYGENFTEKVTHKTAGGCRSVFVKADVN) the chain is Cytoplasmic.

Zn(2+) is required as a cofactor.

The protein resides in the cell membrane. In terms of biological role, metalloprotease. Acts together with protease sup-17 to facilitate lin-12/Notch signaling during developmental cell fate decision, including anchor cell/ventral uterine precursor cell decision. By modulating glp-1/Notch signaling, plays a role in germline development. This is Disintegrin and metalloproteinase domain-containing protein 17 homolog from Caenorhabditis elegans.